The chain runs to 449 residues: Na(+)/H(+) antiporter NhaA 2 (449 aa).

A run of 11 helical transmembrane segments spans residues 32 to 52 (IEAT…TLSN), 87 to 107 (GLMT…VVLG), 114 to 134 (MVAL…GLYL), 145 to 165 (GWGV…ALLG), 174 to 194 (VFLL…VAVG), 202 to 222 (TALA…LLGV), 233 to 253 (AIIW…GVIL), 318 to 338 (WVAF…PITI), 347 to 367 (LAVM…FAWL), 382 to 402 (WGGL…ALFI), and 417 to 437 (LGIL…LCAL).

This sequence belongs to the NhaA Na(+)/H(+) (TC 2.A.33) antiporter family.

The protein resides in the cell inner membrane. It catalyses the reaction Na(+)(in) + 2 H(+)(out) = Na(+)(out) + 2 H(+)(in). Na(+)/H(+) antiporter that extrudes sodium in exchange for external protons. The protein is Na(+)/H(+) antiporter NhaA 2 of Acidiphilium cryptum (strain JF-5).